The chain runs to 478 residues: Putrescine oxidase (478 aa).

15–70 (RDVVVVGAGPAGLMAARTLVAAGRTVAVLEARDRVGGRTWSKTVDGAFLEIGGQWI) contributes to the FAD binding site.

This sequence belongs to the flavin monoamine oxidase family. It depends on FAD as a cofactor.

It carries out the reaction putrescine + O2 + H2O = 4-aminobutanal + H2O2 + NH4(+). In Kocuria rosea (Deinococcus erythromyxa), this protein is Putrescine oxidase (puo).